Here is a 352-residue protein sequence, read N- to C-terminus: Photosystem II D2 protein 2 (352 aa).

A helical transmembrane segment spans residues 40 to 60; it reads CAYLALGGWLTGTSFVTSWYT. H117 contacts chlorophyll a. Residues 124–140 traverse the membrane as a helical segment; that stretch reads GFMLRQFEIARLVGVRP. Pheophytin a contacts are provided by Q129 and N142. A helical membrane pass occupies residues 152–165; that stretch reads VFVSVFLMYPLGQS. H197 is a binding site for chlorophyll a. Residues 207–227 traverse the membrane as a helical segment; sequence GALLCAIHGATVENTLFEDSE. Residues H214 and F261 each contribute to the a plastoquinone site. Fe cation is bound at residue H214. H268 contributes to the Fe cation binding site. A helical transmembrane segment spans residues 278–294; sequence GLWMSSIGIVGLALNLR.

It belongs to the reaction center PufL/M/PsbA/D family. As to quaternary structure, PSII is composed of 1 copy each of membrane proteins PsbA, PsbB, PsbC, PsbD, PsbE, PsbF, PsbH, PsbI, PsbJ, PsbK, PsbL, PsbM, PsbT, PsbX, PsbY, PsbZ, Psb30/Ycf12, peripheral proteins PsbO, CyanoQ (PsbQ), PsbU, PsbV and a large number of cofactors. It forms dimeric complexes. The cofactor is The D1/D2 heterodimer binds P680, chlorophylls that are the primary electron donor of PSII, and subsequent electron acceptors. It shares a non-heme iron and each subunit binds pheophytin, quinone, additional chlorophylls, carotenoids and lipids. There is also a Cl(-1) ion associated with D1 and D2, which is required for oxygen evolution. The PSII complex binds additional chlorophylls, carotenoids and specific lipids..

It localises to the cellular thylakoid membrane. The enzyme catalyses 2 a plastoquinone + 4 hnu + 2 H2O = 2 a plastoquinol + O2. Functionally, photosystem II (PSII) is a light-driven water:plastoquinone oxidoreductase that uses light energy to abstract electrons from H(2)O, generating O(2) and a proton gradient subsequently used for ATP formation. It consists of a core antenna complex that captures photons, and an electron transfer chain that converts photonic excitation into a charge separation. The D1/D2 (PsbA/PsbD) reaction center heterodimer binds P680, the primary electron donor of PSII as well as several subsequent electron acceptors. D2 is needed for assembly of a stable PSII complex. The chain is Photosystem II D2 protein 2 from Synechococcus sp. (strain ATCC 27144 / PCC 6301 / SAUG 1402/1) (Anacystis nidulans).